Reading from the N-terminus, the 321-residue chain is Degreening-related gene dee76 protein (321 aa).

Belongs to the Mo25 family.

The sequence is that of Degreening-related gene dee76 protein (DEE76) from Auxenochlorella protothecoides (Green microalga).